We begin with the raw amino-acid sequence, 243 residues long: MTPEEFKKALEDKGYQISDHQMAQFATYYKMLVETNEHVNLTAITEENEVYLKHFYDSVTPLLEAPEYFKSGAELCDVGAGAGFPSLPMKILFPSLKVTIVDSLNKRITFLKTLVDQLELTDVTLVHDRAETFGAKKSVYREKFEIVTARAVARLSVLSELCIPLVKQNGFFIALKAANTEQELSDGKMAIAILGGKLIVDKDFALPATGDERHLVVVEKKKQTPNKYPRKPGTPGKDPIGKK.

S-adenosyl-L-methionine is bound by residues Gly79, Phe84, 130–131, and Arg150; that span reads AE. The disordered stretch occupies residues 219–243; sequence EKKKQTPNKYPRKPGTPGKDPIGKK.

The protein belongs to the methyltransferase superfamily. RNA methyltransferase RsmG family.

Its subcellular location is the cytoplasm. Specifically methylates the N7 position of a guanine in 16S rRNA. The sequence is that of Ribosomal RNA small subunit methyltransferase G from Pediococcus pentosaceus (strain ATCC 25745 / CCUG 21536 / LMG 10740 / 183-1w).